The sequence spans 340 residues: Glyceraldehyde-3-phosphate dehydrogenase (340 aa).

NAD(+) is bound by residues 11-12 and G111; that span reads SI. A D-glyceraldehyde 3-phosphate-binding site is contributed by 140 to 142; sequence SCN. C141 functions as the Nucleophile in the catalytic mechanism. NAD(+) is bound at residue R169. Residue 195–196 coordinates D-glyceraldehyde 3-phosphate; sequence HG. Position 303 (Q303) interacts with NAD(+).

This sequence belongs to the glyceraldehyde-3-phosphate dehydrogenase family. As to quaternary structure, homotetramer.

It localises to the cytoplasm. It catalyses the reaction D-glyceraldehyde 3-phosphate + phosphate + NADP(+) = (2R)-3-phospho-glyceroyl phosphate + NADPH + H(+). The enzyme catalyses D-glyceraldehyde 3-phosphate + phosphate + NAD(+) = (2R)-3-phospho-glyceroyl phosphate + NADH + H(+). It participates in carbohydrate degradation; glycolysis; pyruvate from D-glyceraldehyde 3-phosphate: step 1/5. This Methanococcus maripaludis (strain C6 / ATCC BAA-1332) protein is Glyceraldehyde-3-phosphate dehydrogenase.